The sequence spans 314 residues: Methionyl-tRNA formyltransferase (314 aa).

112 to 115 (SLLP) lines the (6S)-5,6,7,8-tetrahydrofolate pocket.

Belongs to the Fmt family.

It carries out the reaction L-methionyl-tRNA(fMet) + (6R)-10-formyltetrahydrofolate = N-formyl-L-methionyl-tRNA(fMet) + (6S)-5,6,7,8-tetrahydrofolate + H(+). Attaches a formyl group to the free amino group of methionyl-tRNA(fMet). The formyl group appears to play a dual role in the initiator identity of N-formylmethionyl-tRNA by promoting its recognition by IF2 and preventing the misappropriation of this tRNA by the elongation apparatus. The protein is Methionyl-tRNA formyltransferase of Tolumonas auensis (strain DSM 9187 / NBRC 110442 / TA 4).